The primary structure comprises 293 residues: Foldase protein PrsA 2 (293 aa).

Positions 1–20 (MKKKLILGLVMMMALFSLAA) are cleaved as a signal peptide. C21 carries the N-palmitoyl cysteine lipid modification. The S-diacylglycerol cysteine moiety is linked to residue C21. Residues 135–226 (QPDITVSHIL…YGYHIIQMDK (92 aa)) enclose the PpiC domain.

The protein belongs to the PrsA family.

Its subcellular location is the cell membrane. It catalyses the reaction [protein]-peptidylproline (omega=180) = [protein]-peptidylproline (omega=0). In terms of biological role, plays a major role in protein secretion by helping the post-translocational extracellular folding of several secreted proteins. The sequence is that of Foldase protein PrsA 2 from Listeria monocytogenes serotype 4b (strain F2365).